The following is a 432-amino-acid chain: Cyclin-A2 (432 aa).

Methionine 1 is modified (N-acetylmethionine). Serine 5 is subject to Phosphoserine. Disordered stretches follow at residues 26-45 and 55-75; these read LQEDQENINPEKAAPVQQPR and SGNPRGLAQQQRPKTRRVAPL. At serine 55 the chain carries Phosphoserine.

The protein belongs to the cyclin family. Cyclin AB subfamily. As to quaternary structure, interacts with the CDK1 and CDK2 protein kinases to form serine/threonine kinase holoenzyme complexes. Interacts with CDK1 (hyperphosphorylated form in G1 and underphosphorylated forms in S and G2). Interacts with CDK2; the interaction increases from G1 to G2. Interacts (associated with CDK2 but not with CDK1) with SCAPER; regulates the activity of CCNA2/CDK2 by transiently maintaining CCNA2 in the cytoplasm. Forms a ternary complex with CDK2 and CDKN1B; CDKN1B inhibits the kinase activity of CDK2 through conformational rearrangements. Interacts with INCA1. In terms of assembly, (Microbial infection) Interacts with human cytomegalovirus protein UL32. Post-translationally, polyubiquitinated via 'Lys-11'-linked ubiquitin by the anaphase-promoting complex (APC/C), leading to its degradation by the proteasome. Deubiquitinated and stabilized by USP37 enables entry into S phase. Ubiquitinated during the G1 phase by the SCF(FBXO31) complex, leading to its proteasomal degradation.

It localises to the nucleus. The protein resides in the cytoplasm. Functionally, cyclin which controls both the G1/S and the G2/M transition phases of the cell cycle. Functions through the formation of specific serine/threonine protein kinase holoenzyme complexes with the cyclin-dependent protein kinases CDK1 or CDK2. The cyclin subunit confers the substrate specificity of these complexes and differentially interacts with and activates CDK1 and CDK2 throughout the cell cycle. The polypeptide is Cyclin-A2 (Homo sapiens (Human)).